Reading from the N-terminus, the 145-residue chain is Large ribosomal subunit protein bL9 (145 aa).

This sequence belongs to the bacterial ribosomal protein bL9 family.

Its function is as follows. Binds to the 23S rRNA. The polypeptide is Large ribosomal subunit protein bL9 (Mesomycoplasma hyopneumoniae (strain J / ATCC 25934 / NCTC 10110) (Mycoplasma hyopneumoniae)).